A 1576-amino-acid chain; its full sequence is Proton channel OtopLc (1576 aa).

Disordered stretches follow at residues 1-602 (MDSS…SSPP) and 621-736 (QIGS…SSPV). Composition is skewed to low complexity over residues 58-67 (SLAEEVLLLV) and 76-85 (LLGQPLPTLT). Acidic residues-rich tracts occupy residues 103–116 (DEGDDEDEREEPVP), 159–171 (DDGEGEETDDAEE), 186–198 (SNPDEEEEEEEQE), and 206–216 (PKEEDEEEDDD). Residues 219–228 (TPPPPLPPLP) are compositionally biased toward pro residues. Residues 229–241 (SNFSYVQGHNLGQ) are compositionally biased toward polar residues. N-linked (GlcNAc...) asparagine glycosylation occurs at Asn230. Positions 243–252 (TPPLTKSPSN) are enriched in low complexity. The span at 253–264 (SPSPPVTPPPCP) shows a compositional bias: pro residues. Asn267 carries N-linked (GlcNAc...) asparagine glycosylation. The span at 316–341 (DQPEPEDQPPEPENEPEPEPEPEPEP) shows a compositional bias: acidic residues. The span at 347–356 (AREDYSRSLD) shows a compositional bias: basic and acidic residues. Residues 362–376 (TTITTPPSNGYSASS) are compositionally biased toward polar residues. The segment covering 384-393 (HFAELDEDRG) has biased composition (basic and acidic residues). The segment covering 402 to 419 (QEPEEEVEEEEEEEEEEL) has biased composition (acidic residues). Positions 420–433 (TKETDEISVDRESL) are enriched in basic and acidic residues. Residues 434 to 457 (QDQGGDSISSPRPASILTGSISTS) show a composition bias toward polar residues. Low complexity predominate over residues 465 to 507 (SPKPESRGPSRSGSQRSQLRSGSQQGSIAESRGGSRIGSRTGS). Composition is skewed to polar residues over residues 519-534 (PQASLKSQTSIRSQGQ) and 545-555 (KSGSQRMQSPQ). Over residues 563–575 (MPSPPLMRSPPPE) the composition is skewed to pro residues. Residues 661-685 (AAAAPAVTTTAATTAVTSQPRSHFT) are compositionally biased toward low complexity. Positions 686–709 (SSHHHYHLPHQFQHPHHQNHHTHS) are enriched in basic residues. The chain crosses the membrane as a helical span at residues 741 to 761 (LFMAGVAPPIAAGAGSLMAMP). Residues 771 to 845 (GRVSARSGSQ…GSSSQPALSG (75 aa)) are disordered. The span at 776–799 (RSGSQHHVTIDESSLPSHKGNIQE) shows a compositional bias: polar residues. Positions 826–839 (DSSDPPSSPGGSSS) are enriched in low complexity. 2 consecutive transmembrane segments (helical) span residues 891–911 (ALATLFSALYGKLLVVMGIAF) and 931–951 (LYLYIGSMIFLLFMYATLIWG). Residues 962–973 (PSKSATKASGTD) show a composition bias toward polar residues. Residues 962 to 1001 (PSKSATKASGTDSMDESDTDSNSVHHRLPPPIPVRRPSLL) form a disordered region. The next 3 membrane-spanning stretches (helical) occupy residues 1019–1039 (GAVAFGIGSMIYSGLEFGQYF), 1051–1071 (LLALTPATRMAFIFIQMYFIF), and 1084–1104 (IIARFGLMHMIGTNLAVWLNV). N-linked (GlcNAc...) asparagine glycosylation occurs at Asn1121. The next 7 helical transmembrane spans lie at 1179–1199 (FLFPCTIEYSLICAAILYVMW), 1239–1259 (FVGILILVLTIISLIIFFVLI), 1272–1292 (VTICELLIYGTATIATLVGMI), 1310–1330 (ILLVGAQTGSFLYNIFTVIAG), 1340–1360 (LVPINALASIVQTACQTMFIL), 1381–1401 (IVTFMLVVNLAMWAISTLEKS), and 1412–1432 (FYGLWAWTIITHVSMPLAIFY). Asn1479 is a glycosylation site (N-linked (GlcNAc...) asparagine). A disordered region spans residues 1498–1549 (EEVDSGESNSAEDAGAGAGSGGSRGSGGGAGAAEAGEAGEEGQQGGDSSCGL). Positions 1503–1512 (GESNSAEDAG) are enriched in low complexity. Residues 1513–1528 (AGAGSGGSRGSGGGAG) are compositionally biased toward gly residues.

Belongs to the otopetrin family.

It localises to the cell membrane. Proton-selective channel that specifically transports protons into cells. Proton-selective channel activity is probably required in cell types that use changes in intracellular pH for cell signaling or to regulate biochemical or developmental processes. The polypeptide is Proton channel OtopLc (Drosophila melanogaster (Fruit fly)).